Reading from the N-terminus, the 444-residue chain is Protein phosphatase 2C homolog C10F6.17c (444 aa).

One can recognise a PPM-type phosphatase domain in the interval 85-439; that stretch reads RYDFNQVASN…DDITVTVIFF (355 aa). Mn(2+)-binding residues include D121, G122, and D344.

The protein belongs to the PP2C family. Requires Mg(2+) as cofactor. The cofactor is Mn(2+).

The protein resides in the mitochondrion. The catalysed reaction is O-phospho-L-seryl-[protein] + H2O = L-seryl-[protein] + phosphate. It catalyses the reaction O-phospho-L-threonyl-[protein] + H2O = L-threonyl-[protein] + phosphate. Its function is as follows. Involved in regulation of pyruvate dehydrogenase activity. This Schizosaccharomyces pombe (strain 972 / ATCC 24843) (Fission yeast) protein is Protein phosphatase 2C homolog C10F6.17c.